A 369-amino-acid polypeptide reads, in one-letter code: C2 calcium-dependent domain-containing protein 4A (369 aa).

2 disordered regions span residues 151-176 (PRAP…ARRP) and 197-240 (RSRR…PFPE). The segment covering 153 to 168 (APGPATPAAPGCPRPP) has biased composition (pro residues). A compositionally biased stretch (low complexity) spans 220–237 (SQSPARAPSTSPPSSRVP). Residues 253-369 (AGDALRLAAE…ELSLGALLLL (117 aa)) enclose the C2 domain.

This sequence belongs to the C2CD4 family. Specifically expressed in endothelial cells.

The protein localises to the nucleus. May be involved in inflammatory process. May regulate cell architecture and adhesion. This chain is C2 calcium-dependent domain-containing protein 4A (C2CD4A), found in Homo sapiens (Human).